The following is a 94-amino-acid chain: DNA-binding protein HU (94 aa).

The disordered stretch occupies residues 55–94 (RAERPGRNPKTGEPIMIAASNNPSFKPGKALKDAVKSSAG). The segment covering 84–94 (ALKDAVKSSAG) has biased composition (basic and acidic residues).

Belongs to the bacterial histone-like protein family.

Functionally, histone-like DNA-binding protein which is capable of wrapping DNA to stabilize it, and thus to prevent its denaturation under extreme environmental conditions. This Xylella fastidiosa (strain Temecula1 / ATCC 700964) protein is DNA-binding protein HU (hup).